The chain runs to 403 residues: Probable tRNA sulfurtransferase (403 aa).

The THUMP domain maps to 60–165; the sequence is QLAEERLKPI…KEGVFLSCRT (106 aa). ATP-binding positions include 183–184, 208–209, R265, G287, and Q296; these read ML and HF.

Belongs to the ThiI family.

It localises to the cytoplasm. The enzyme catalyses [ThiI sulfur-carrier protein]-S-sulfanyl-L-cysteine + a uridine in tRNA + 2 reduced [2Fe-2S]-[ferredoxin] + ATP + H(+) = [ThiI sulfur-carrier protein]-L-cysteine + a 4-thiouridine in tRNA + 2 oxidized [2Fe-2S]-[ferredoxin] + AMP + diphosphate. It carries out the reaction [ThiS sulfur-carrier protein]-C-terminal Gly-Gly-AMP + S-sulfanyl-L-cysteinyl-[cysteine desulfurase] + AH2 = [ThiS sulfur-carrier protein]-C-terminal-Gly-aminoethanethioate + L-cysteinyl-[cysteine desulfurase] + A + AMP + 2 H(+). It participates in cofactor biosynthesis; thiamine diphosphate biosynthesis. In terms of biological role, catalyzes the ATP-dependent transfer of a sulfur to tRNA to produce 4-thiouridine in position 8 of tRNAs, which functions as a near-UV photosensor. Also catalyzes the transfer of sulfur to the sulfur carrier protein ThiS, forming ThiS-thiocarboxylate. This is a step in the synthesis of thiazole, in the thiamine biosynthesis pathway. The sulfur is donated as persulfide by IscS. The chain is Probable tRNA sulfurtransferase from Listeria innocua serovar 6a (strain ATCC BAA-680 / CLIP 11262).